A 124-amino-acid polypeptide reads, in one-letter code: Small ribosomal subunit protein uS12 (124 aa).

3-methylthioaspartic acid is present on Asp-89. The disordered stretch occupies residues 103 to 124 (DTAGVKDRRQGRSKYGAKRPKD). Residues 113–124 (GRSKYGAKRPKD) are compositionally biased toward basic residues.

It belongs to the universal ribosomal protein uS12 family. In terms of assembly, part of the 30S ribosomal subunit. Contacts proteins S8 and S17. May interact with IF1 in the 30S initiation complex.

With S4 and S5 plays an important role in translational accuracy. Functionally, interacts with and stabilizes bases of the 16S rRNA that are involved in tRNA selection in the A site and with the mRNA backbone. Located at the interface of the 30S and 50S subunits, it traverses the body of the 30S subunit contacting proteins on the other side and probably holding the rRNA structure together. The combined cluster of proteins S8, S12 and S17 appears to hold together the shoulder and platform of the 30S subunit. The sequence is that of Small ribosomal subunit protein uS12 from Acaryochloris marina (strain MBIC 11017).